Consider the following 332-residue polypeptide: 2,3-diketo-L-gulonate reductase (332 aa).

Residue histidine 44 is the Proton donor of the active site. NAD(+) contacts are provided by residues 168–174 (ITMVDMS), 224–225 (WK), and 304–306 (GHE).

The protein belongs to the LDH2/MDH2 oxidoreductase family. DlgD subfamily. Homodimer.

Its subcellular location is the cytoplasm. The enzyme catalyses 3-dehydro-L-gulonate + NAD(+) = 2,3-dioxo-L-gulonate + NADH + H(+). The catalysed reaction is 3-dehydro-L-gulonate + NADP(+) = 2,3-dioxo-L-gulonate + NADPH + H(+). Its function is as follows. Catalyzes the reduction of 2,3-diketo-L-gulonate in the presence of NADH, to form 3-keto-L-gulonate. The protein is 2,3-diketo-L-gulonate reductase of Salmonella paratyphi B (strain ATCC BAA-1250 / SPB7).